Reading from the N-terminus, the 37-residue chain is Large ribosomal subunit protein bL36c (37 aa).

It belongs to the bacterial ribosomal protein bL36 family.

It localises to the plastid. Its subcellular location is the chloroplast. The protein is Large ribosomal subunit protein bL36c of Phalaenopsis aphrodite subsp. formosana (Moth orchid).